The chain runs to 186 residues: MSSKILSENPTELELKVAQAFVDLESQADLKAELRPLQFKSIKEIDVNGGKKALAVFVPPPSLQAYRKVQTRLTRELEKKFPDRHVVFLAERRILPKPARKARKQQKRPRSRTLTAVHDKILEDLVFPTEIIGKRVRYLVGGNKIQKVLLDSKDSTAVDYKLDSFQQLYSKLTGKQVVFEIPGESH.

Belongs to the eukaryotic ribosomal protein eS7 family. As to quaternary structure, component of the small ribosomal subunit. Mature ribosomes consist of a small (40S) and a large (60S) subunit. The 40S subunit contains about 32 different proteins and 1 molecule of RNA (18S). The 60S subunit contains 45 different proteins and 3 molecules of RNA (25S, 5.8S and 5S).

It is found in the cytoplasm. Functionally, component of the ribosome, a large ribonucleoprotein complex responsible for the synthesis of proteins in the cell. The small ribosomal subunit (SSU) binds messenger RNAs (mRNAs) and translates the encoded message by selecting cognate aminoacyl-transfer RNA (tRNA) molecules. The large subunit (LSU) contains the ribosomal catalytic site termed the peptidyl transferase center (PTC), which catalyzes the formation of peptide bonds, thereby polymerizing the amino acids delivered by tRNAs into a polypeptide chain. The nascent polypeptides leave the ribosome through a tunnel in the LSU and interact with protein factors that function in enzymatic processing, targeting, and the membrane insertion of nascent chains at the exit of the ribosomal tunnel. RPS7A is involved in nucleolar processing of pre-18S ribosomal RNA and ribosome assembly. The sequence is that of Small ribosomal subunit protein eS7 (RPS7A) from Candida albicans (strain SC5314 / ATCC MYA-2876) (Yeast).